The chain runs to 552 residues: Ribulokinase (552 aa).

This sequence belongs to the ribulokinase family.

The catalysed reaction is D-ribulose + ATP = D-ribulose 5-phosphate + ADP + H(+). It catalyses the reaction L-ribulose + ATP = L-ribulose 5-phosphate + ADP + H(+). Its pathway is carbohydrate degradation; L-arabinose degradation via L-ribulose; D-xylulose 5-phosphate from L-arabinose (bacterial route): step 2/3. The protein is Ribulokinase of Bacillus licheniformis (strain ATCC 14580 / DSM 13 / JCM 2505 / CCUG 7422 / NBRC 12200 / NCIMB 9375 / NCTC 10341 / NRRL NRS-1264 / Gibson 46).